The sequence spans 50 residues: Sperm protamine P1 (50 aa).

This sequence belongs to the protamine P1 family. Testis.

Its subcellular location is the nucleus. The protein resides in the chromosome. Its function is as follows. Protamines substitute for histones in the chromatin of sperm during the haploid phase of spermatogenesis. They compact sperm DNA into a highly condensed, stable and inactive complex. This Trachypithecus phayrei (Phayre's leaf monkey) protein is Sperm protamine P1 (PRM1).